The chain runs to 398 residues: Secreted aspartic protease 3 (398 aa).

The first 18 residues, 1-18, serve as a signal peptide directing secretion; it reads MFLKNIFIALAIALLADA. The propeptide at 19-58 is activation peptide; that stretch reads TPTTFNNSPGFVALNFDVIKTHKNVTGPQGEINTNVNVKR. N-linked (GlcNAc...) asparagine glycosylation is present at N42. Residues 72–384 enclose the Peptidase A1 domain; that stretch reads YASDITVGSN…DLDDNEISLA (313 aa). Residue D90 is part of the active site. Position 90 to 92 (90 to 92) interacts with pepstatin A; the sequence is DTG. Residues 103–112 are compositionally biased toward polar residues; that stretch reads VSCQAGQGQD. A disordered region spans residues 103-139; sequence VSCQAGQGQDPNFCKNEGTYSPSSSSSSQNLNSPFSI. A disulfide bridge links C105 with C116. A compositionally biased stretch (low complexity) spans 123–138; sequence SPSSSSSSQNLNSPFS. Position 140–143 (140–143) interacts with pepstatin A; that stretch reads EYGD. Residues H188, D248, H254, and D270 each contribute to the Zn(2+) site. D274 is a catalytic residue. 274-278 contributes to the pepstatin A binding site; the sequence is DSGTT. C312 and C350 are joined by a disulfide. N313 is a glycosylation site (N-linked (GlcNAc...) asparagine).

The protein belongs to the peptidase A1 family. As to quaternary structure, monomer.

The protein resides in the secreted. It carries out the reaction Preferential cleavage at the carboxyl of hydrophobic amino acids, but fails to cleave 15-Leu-|-Tyr-16, 16-Tyr-|-Leu-17 and 24-Phe-|-Phe-25 of insulin B chain. Activates trypsinogen, and degrades keratin.. With respect to regulation, inhibited by pepstatin A analogs. Functionally, secreted aspartic peptidases (SAPs) are a group of ten acidic hydrolases considered as key virulence factors. These enzymes supply the fungus with nutrient amino acids as well as are able to degrade the selected host's proteins involved in the immune defense. Induces host inflammatory cytokine production in a proteolytic activity-independent way. Moreover, acts toward human hemoglobin though limited proteolysis to generate a variety of antimicrobial hemocidins, enabling to compete with the other microorganisms of the same physiological niche using the microbicidal peptides generated from the host protein. Its function is as follows. Plays a key role in defense against host by cleaving histatin-5 (Hst 5), a peptide from human saliva that carries out fungicidal activity. The cleavage rate decreases in an order of SAP2 &gt; SAP9 &gt; SAP3 &gt; SAP7 &gt; SAP4 &gt; SAP1 &gt; SAP8. The first cleavage occurs between residues 'Lys-17' and 'His-18' of Hst 5, giving DSHAKRHHGYKRKFHEK and HHSHRGY peptides. Simultaneously, the DSHAKRHHGYKRK peptide is also formed. Further fragmentation by SAP3 results in DSHAKRHHGY and KRKFHEK products. The sequence is that of Secreted aspartic protease 3 from Candida albicans (strain SC5314 / ATCC MYA-2876) (Yeast).